The following is a 186-amino-acid chain: Histone deacetylase complex subunit SAP25 (186 aa).

Disordered stretches follow at residues 1–25 (MSPL…PSCG) and 148–186 (EQTP…GTDT). Polar residues-rich tracts occupy residues 148–163 (EQTP…STSC) and 177–186 (GDQSCSGTDT).

May be a component of the mSIN3A corepressor complex. Interacts with SIN3A and HDAC2. As to expression, widely expressed.

The protein resides in the nucleus. Its subcellular location is the cytoplasm. Involved in the transcriptional repression mediated by the mSIN3A but not the N-CoR corepressor complex. The chain is Histone deacetylase complex subunit SAP25 (Sap25) from Mus musculus (Mouse).